The sequence spans 578 residues: 65-kDa microtubule-associated protein 2 (578 aa).

Coiled coils occupy residues 64–84 (AELLQTLSDATVELSNLTTAL), 151–184 (DETDLSLKRLDDFQRKLQELQKEKSDRLQKVLEF), 235–257 (TLKEDKMQRLKKLQELATQLTDL), 290–312 (ALALDLIEQAEVEVDRLDQLKSS), and 461–489 (AMLDEYTMLRQEREDEKRRLKEQKKQQEQ). Over residues 473–494 (REDEKRRLKEQKKQQEQPHTDQ) the composition is skewed to basic and acidic residues. Positions 473 to 578 (REDEKRRLKE…SRADPVMASP (106 aa)) are disordered. Serine 503 and serine 532 each carry phosphoserine. Polar residues predominate over residues 549–558 (KIASPSNIVA). Phosphoserine is present on residues serine 566, serine 569, and serine 577.

Belongs to the MAP65/ASE1 family. Forms a dimer. Binds to microtubules (MT). Bundles polymerized MT via the formation of 25-nm crossbridges with centrally located endocytic MT.

It localises to the nucleus. The protein localises to the cytoplasm. Its subcellular location is the cytoskeleton. The protein resides in the spindle pole. It is found in the phragmoplast. Microtubule-associated protein that stabilize microtubules (MT). Involved in the regulation of MT organization and dynamics. Confers MT resistance to the drug propyzamide and cold conditions. The polypeptide is 65-kDa microtubule-associated protein 2 (MAP65-2) (Arabidopsis thaliana (Mouse-ear cress)).